Consider the following 390-residue polypeptide: MIIVVGIGADGMTGLSEHSRSELRRATVIYGSKRQLALLDDTVTAERWEWPTPMLPAVQGLSPDGADLHVVASGDPLLHGIGSTLIRLFGHDNVTVLPHVSAVTLACARMGWNVYDTEVISLVTAQPHTAVRRGGRAIVLSGDRSTPQALAVLLTEHGRGDSKFSVLEQLGGPAERRRDGTARAWACDPPLDVDELNVIAVRYLLDERTSWAPDEAFAHDGQITKHPIRVLTLAALAPRPGQRLWDVGAGSGAIAVQWCRSWPGCTAVAFERDERRRRNIGFNAAAFGVSVDVRGDAPDAFDDAARPSVIFLGGGVTQPGLLEACLDSLPAGGNLVANAVTVESEAALAHAYSRLGGELRRFQHYLGEPLGGFTGWRPQLPVTQWSVTKR.

This sequence belongs to the precorrin methyltransferase family.

The enzyme catalyses precorrin-6B + 2 S-adenosyl-L-methionine = precorrin-8X + 2 S-adenosyl-L-homocysteine + CO2 + 3 H(+). The protein operates within cofactor biosynthesis; adenosylcobalamin biosynthesis; cob(II)yrinate a,c-diamide from precorrin-2 (aerobic route): step 7/10. Functionally, catalyzes the methylation of both C-5 and C-15 in precorrin-6Y to form precorrin-8X. In Mycobacterium tuberculosis (strain ATCC 25618 / H37Rv), this protein is Precorrin-6Y C(5,15)-methyltransferase [decarboxylating] (cobL).